A 645-amino-acid chain; its full sequence is Cysteine-rich receptor-like protein kinase 10 (645 aa).

The signal sequence occupies residues 1–27 (MSMACYYLAAAAAGLALLLLHAPLTDA). Gnk2-homologous domains follow at residues 28 to 132 (QTLV…NDAF) and 140 to 251 (SQGM…VYPF). Residues 28–283 (QTLVPLCGDS…AGERSKNKRS (256 aa)) are Extracellular-facing. N-linked (GlcNAc...) asparagine glycosylation is found at Asn39 and Asn91. Disulfide bonds link Cys86-Cys95 and Cys98-Cys123. N-linked (GlcNAc...) asparagine glycans are attached at residues Asn151 and Asn169. 2 disulfides stabilise this stretch: Cys204/Cys213 and Cys216/Cys242. A helical membrane pass occupies residues 284–304 (AILAISMPTIALVLATIAAWF). Residues 305 to 645 (CSTSWRRRRL…WVQEIGATAS (341 aa)) lie on the Cytoplasmic side of the membrane. The Protein kinase domain maps to 348 to 619 (FSEHKRLGEG…PLMSAVNAML (272 aa)). ATP-binding positions include 354-362 (LGEGGFGVV) and Lys376. The Proton acceptor role is filled by Asp473.

Belongs to the protein kinase superfamily. Ser/Thr protein kinase family. CRK subfamily.

The protein localises to the membrane. Its function is as follows. Involved in disease resistance. Required for NPR1/NH1-mediated immunity to the bacterial blight pathogen Xanthomomas oryzae pv. oryzae (Xoo). Required for the benzothiadiazole (BTH)-induced immune response. Probably regulated by the transcription factor TGA2.1. This is Cysteine-rich receptor-like protein kinase 10 from Oryza sativa subsp. japonica (Rice).